Here is a 370-residue protein sequence, read N- to C-terminus: Spermidine/putrescine import ATP-binding protein PotA (370 aa).

In terms of domain architecture, ABC transporter spans 6 to 236; that stretch reads IELHQVTKRY…PINHFVADFI (231 aa). 38 to 45 is a binding site for ATP; it reads GPSGCGKT.

The protein belongs to the ABC transporter superfamily. Spermidine/putrescine importer (TC 3.A.1.11.1) family. As to quaternary structure, the complex is composed of two ATP-binding proteins (PotA), two transmembrane proteins (PotB and PotC) and a solute-binding protein (PotD).

The protein resides in the cell membrane. The catalysed reaction is ATP + H2O + polyamine-[polyamine-binding protein]Side 1 = ADP + phosphate + polyamineSide 2 + [polyamine-binding protein]Side 1.. Part of the ABC transporter complex PotABCD involved in spermidine/putrescine import. Responsible for energy coupling to the transport system. This is Spermidine/putrescine import ATP-binding protein PotA from Levilactobacillus brevis (strain ATCC 367 / BCRC 12310 / CIP 105137 / JCM 1170 / LMG 11437 / NCIMB 947 / NCTC 947) (Lactobacillus brevis).